The sequence spans 122 residues: Acidic phospholipase A2 homolog vipoxin A chain (122 aa).

Disulfide bonds link Cys-26-Cys-115, Cys-28-Cys-44, Cys-43-Cys-95, Cys-49-Cys-122, Cys-50-Cys-88, Cys-57-Cys-81, and Cys-75-Cys-86.

Belongs to the phospholipase A2 family. Group II subfamily. D49 sub-subfamily. In terms of assembly, heterodimer of A and B (AC P14420) chains; non-covalently linked. The A chain (acidic) is non-toxic, and increases the toxicity of the B chain (basic). The A chain may act as factor stabilizing the complex structure and hence retaining its toxicity by preventing non-specific binding. Upon binding to the target membranes the A chain may dissociate. In terms of tissue distribution, expressed by the venom gland.

It localises to the secreted. Heterodimer: postsynaptic neurotoxin. Functionally, monomer: Acidic phospholipase A2 homolog that is non-toxic. This is Acidic phospholipase A2 homolog vipoxin A chain from Vipera ammodytes meridionalis (Eastern sand viper).